The sequence spans 81 residues: Putative membrane protein insertion efficiency factor (81 aa).

Belongs to the UPF0161 family.

The protein resides in the cell inner membrane. Could be involved in insertion of integral membrane proteins into the membrane. The sequence is that of Putative membrane protein insertion efficiency factor from Pseudomonas syringae pv. syringae (strain B728a).